Here is a 340-residue protein sequence, read N- to C-terminus: Cysteinyl leukotriene receptor 1 (340 aa).

The Extracellular portion of the chain corresponds to 1–31; the sequence is MDETGNPTIPPASNNTCYDSIDDFRNQVYST. N-linked (GlcNAc...) asparagine glycosylation is present at asparagine 14. Residues 32-52 traverse the membrane as a helical segment; it reads LYSMISVVGFFGNGFVLYVLV. Over 53–60 the chain is Cytoplasmic; the sequence is KTYHEKSA. The helical transmembrane segment at 61–81 threads the bilayer; that stretch reads FQVYMINLAVADLLCVCTLPL. The Extracellular portion of the chain corresponds to 82–109; it reads RVAYYVHKGIWLFGDFLCRLSTYALYVN. Cysteines 99 and 176 form a disulfide. A helical transmembrane segment spans residues 110–130; it reads LYCSIFFMTAMSFFRCVAIVF. The Cytoplasmic portion of the chain corresponds to 131-144; it reads PVQNISLVTQKKAR. Residues 145–165 form a helical membrane-spanning segment; sequence LVCIAIWMFVILTSSPFLMAN. At 166 to 196 the chain is on the extracellular side; that stretch reads TYKDEKNNTKCFEPPQDNQAKNYVLILHYVS. Asparagine 172 is a glycosylation site (N-linked (GlcNAc...) asparagine). The helical transmembrane segment at 197 to 217 threads the bilayer; that stretch reads LFIGFIIPFITIIVCYTMIIF. Topologically, residues 218-233 are cytoplasmic; that stretch reads TLLKSSMKKNLSSRKR. The helical transmembrane segment at 234 to 254 threads the bilayer; the sequence is AIGMIIVVTAAFLVSFMPYHI. Residues 255–279 are Extracellular-facing; sequence QRTIHLHFLHNKTKPCDSILRMQKS. Residue asparagine 265 is glycosylated (N-linked (GlcNAc...) asparagine). A helical membrane pass occupies residues 280 to 300; the sequence is VVITLSLAASNCCFDPLLYFF. Residues 301 to 340 are Cytoplasmic-facing; it reads SGGNFRRRLSTIRKYSLSSMTYIPKKKTSLPQKGKDICKE.

The protein belongs to the G-protein coupled receptor 1 family.

The protein resides in the cell membrane. Its function is as follows. Receptor for cysteinyl leukotrienes mediating bronchoconstriction of individuals with and without asthma. Stimulation by LTD4 results in the contraction and proliferation of smooth muscle, edema, eosinophil migration and damage to the mucus layer in the lung. This response is mediated via a G-protein that activates a phosphatidylinositol-calcium second messenger system. In Cavia porcellus (Guinea pig), this protein is Cysteinyl leukotriene receptor 1 (CYSLTR1).